Consider the following 189-residue polypeptide: METSAPRAGSQVVATTERHSAACRADPLRVSSRDKLTEMAASTQGNFDGNFESLDLAEFAKKQPWWRKLFGQESGPSAEKYSVATQLFIGGVTGWCTGFIFQNVGKLAATAVGGGFFLLQLANHTGYIKVDWQRVEKDMKKAKEQLKIRKSNQMPTEVRSKAEEVVSFVKKNVLVTGGFFGGFLLGMAS.

At 1–80 the chain is on the cytoplasmic side; sequence METSAPRAGS…GQESGPSAEK (80 aa). Phosphoserine occurs at positions 10 and 53. Residues 81-101 traverse the membrane as a helical segment; the sequence is YSVATQLFIGGVTGWCTGFIF. The Mitochondrial intermembrane segment spans residues 102–107; it reads QNVGKL. A helical membrane pass occupies residues 108 to 128; sequence AATAVGGGFFLLQLANHTGYI. At 129–164 the chain is on the cytoplasmic side; the sequence is KVDWQRVEKDMKKAKEQLKIRKSNQMPTEVRSKAEE. Serine 151 carries the post-translational modification Phosphoserine. Residues 165–185 traverse the membrane as a helical segment; sequence VVSFVKKNVLVTGGFFGGFLL. Over 186 to 189 the chain is Mitochondrial intermembrane; sequence GMAS.

The protein belongs to the FUN14 family.

The protein localises to the mitochondrion outer membrane. The protein resides in the nucleus. In terms of biological role, binds directly and specifically 1,2-Diacyl-sn-glycero-3-phospho-(1'-myo-inositol-3',4',5'-bisphosphate) (PIP3) leading to the recruitment of PIP3 to mitochondria and may play a role in the regulation of the platelet activation via AKT/GSK3B/cGMP signaling pathways. May act as transcription factor that regulates SREBP1 (isoform SREBP-1C) expression in order to modulate triglyceride (TG) homeostasis in hepatocytes. This is FUN14 domain-containing protein 2 from Macaca mulatta (Rhesus macaque).